The following is a 349-amino-acid chain: Protein RecA (349 aa).

67–74 lines the ATP pocket; the sequence is GPESSGKT.

It belongs to the RecA family.

The protein resides in the cytoplasm. Its function is as follows. Can catalyze the hydrolysis of ATP in the presence of single-stranded DNA, the ATP-dependent uptake of single-stranded DNA by duplex DNA, and the ATP-dependent hybridization of homologous single-stranded DNAs. It interacts with LexA causing its activation and leading to its autocatalytic cleavage. The chain is Protein RecA from Chlamydia abortus (strain DSM 27085 / S26/3) (Chlamydophila abortus).